A 73-amino-acid polypeptide reads, in one-letter code: Conotoxin CnIIIF (73 aa).

Positions 1–19 (MSKLGVLLTICLLLFPLTA) are cleaved as a signal peptide. Residues 20–51 (LPMDGDQSVDRPAERMQDDISSGQHPLFNQKR) constitute a propeptide that is removed on maturation. Intrachain disulfides connect C53–C72, C54–C70, and C60–C73.

Belongs to the conotoxin M superfamily. In terms of tissue distribution, expressed by the venom duct.

The protein resides in the secreted. Its function is as follows. Shows a paralytic effect in fish. The polypeptide is Conotoxin CnIIIF (Conus consors (Singed cone)).